The sequence spans 580 residues: Zinc finger CCCH domain-containing protein 47 (580 aa).

ANK repeat units follow at residues 72 to 102 (EERTPLMVAAMYGSIKVLTFIVSTGKSDVNR) and 107 to 139 (ERVTPLHCAVAGCSVNMIEVINVLLDASALVNS). 2 consecutive C3H1-type zinc fingers follow at residues 251 to 278 (PYTCVPCPEFRKGSCPKGDSCEYAHGVF) and 286 to 310 (QYKTRLCKDETGCARKVCFFAHKRE). Residues 421-451 (YVSSPSRNSQMGQNMNQHYPSSPVRQPPSQH) are disordered.

As to expression, expressed in roots and anthers.

It is found in the nucleus. Its function is as follows. Involved in salt stress response. May positively modulate plant tolerance to salt stress. This Arabidopsis thaliana (Mouse-ear cress) protein is Zinc finger CCCH domain-containing protein 47.